The following is a 567-amino-acid chain: Hydroxylamine reductase 2 (567 aa).

[4Fe-4S] cluster is bound by residues Cys-5, Cys-8, Cys-17, and Cys-23. 8 residues coordinate hybrid [4Fe-2O-2S] cluster: His-262, Glu-286, Cys-330, Cys-421, Cys-449, Cys-474, Glu-509, and Lys-511. Cys-421 carries the post-translational modification Cysteine persulfide.

Belongs to the HCP family. Requires [4Fe-4S] cluster as cofactor. It depends on hybrid [4Fe-2O-2S] cluster as a cofactor.

Its subcellular location is the cytoplasm. It carries out the reaction A + NH4(+) + H2O = hydroxylamine + AH2 + H(+). Functionally, catalyzes the reduction of hydroxylamine to form NH(3) and H(2)O. This is Hydroxylamine reductase 2 from Clostridium acetobutylicum (strain ATCC 824 / DSM 792 / JCM 1419 / IAM 19013 / LMG 5710 / NBRC 13948 / NRRL B-527 / VKM B-1787 / 2291 / W).